The primary structure comprises 308 residues: B- and T-lymphocyte attenuator (308 aa).

Positions 1 to 29 are cleaved as a signal peptide; sequence MKTVPAMLVTPRSFREFFILLLGLWSILC. The Extracellular segment spans residues 30 to 183; that stretch reads KEPTKRIGEE…ERPGRTWLLY (154 aa). The Ig-like V-type domain occupies 32–134; the sequence is PTKRIGEECR…SANLNSEVIN (103 aa). 3 disulfide bridges follow: Cys-40–Cys-69, Cys-64–Cys-124, and Cys-78–Cys-85. N-linked (GlcNAc...) asparagine glycosylation is found at Asn-49, Asn-74, Asn-81, Asn-148, and Asn-165. A helical membrane pass occupies residues 184–204; the sequence is ALLPLGTSLLLLACVCLLCFL. Over 205 to 308 the chain is Cytoplasmic; it reads RRIQGKEKKP…TEYASICVRS (104 aa).

Interacts with tyrosine phosphatases PTPN6/SHP-1 and PTPN11/SHP-2. Interacts with TNFRSF14/HVEM (via cysteine-rich domain 1). In terms of processing, phosphorylated on Tyr residues by TNFRSF14 and by antigen receptors cross-linking, both inducing association with PTPN6 and PTPN11. N-glycosylated.

It is found in the cell membrane. Functionally, inhibitory receptor on lymphocytes that negatively regulates antigen receptor signaling via PTPN6/SHP-1 and PTPN11/SHP-2. May interact in cis (on the same cell) or in trans (on other cells) with TNFRSF14. In cis interactions, appears to play an immune regulatory role inhibiting in trans interactions in naive T cells to maintain a resting state. In trans interactions, can predominate during adaptive immune response to provide survival signals to effector T cells. The sequence is that of B- and T-lymphocyte attenuator from Rattus norvegicus (Rat).